Consider the following 739-residue polypeptide: TonB-dependent heme receptor A (739 aa).

The N-terminal stretch at 1-22 (MKMKKQCATLTFFIGLHGYTIA) is a signal peptide. One can recognise a TBDR plug domain in the interval 38-150 (GHHERQPDRS…FAGTIKLETK (113 aa)). The region spanning 161–739 (LLGGLLKYGY…NIKLSISKQF (579 aa)) is the TBDR beta-barrel domain.

The protein belongs to the TonB-dependent receptor family.

It localises to the cell outer membrane. Functionally, heme receptor. The protein is TonB-dependent heme receptor A (tdhA) of Haemophilus ducreyi (strain 35000HP / ATCC 700724).